We begin with the raw amino-acid sequence, 629 residues long: Interleukin-23 receptor (629 aa).

A signal peptide spans 1–23 (MNQVTIQWDAVIALYILFSWCHG). Topologically, residues 24 to 355 (GITNINCSGH…LTSDNRGDIG (332 aa)) are extracellular. Residue Asn29 is glycosylated (N-linked (GlcNAc...) asparagine; partial). Asn47, Asn81, and Asn141 each carry an N-linked (GlcNAc...) asparagine glycan. Fibronectin type-III domains lie at 127 to 217 (IPDE…LDDI) and 219 to 318 (IPSA…TPET). N-linked (GlcNAc...) (high mannose) asparagine glycosylation is present at Asn180. N-linked (GlcNAc...) asparagine glycans are attached at residues Asn232 and Asn262. Asn273 is a glycosylation site (N-linked (GlcNAc...) asparagine; partial). The chain crosses the membrane as a helical span at residues 356–376 (LLLGMIVFAVMLSILSLIGIF). Over 377–629 (NRSFRTGIKR…HFNRISLLEK (253 aa)) the chain is Cytoplasmic.

The protein belongs to the type I cytokine receptor family. Type 2 subfamily. As to quaternary structure, heterodimer with IL12RB1. In presence of IL23, the heterodimer forms the IL23 receptor. Interacts with JAK2 and in presence of IL23 with STAT3. In terms of processing, phosphorylated in response to IL23. Expressed by monocytes, Th1, Th0, NK and dendritic cells. Isoform 1 is specifically expressed in NK cells.

The protein localises to the cell membrane. Associates with IL12RB1 to form the interleukin-23 receptor. Binds IL23 and mediates T-cells, NK cells and possibly certain macrophage/myeloid cells stimulation probably through activation of the Jak-Stat signaling cascade. IL23 functions in innate and adaptive immunity and may participate in acute response to infection in peripheral tissues. IL23 may be responsible for autoimmune inflammatory diseases and be important for tumorigenesis. In Homo sapiens (Human), this protein is Interleukin-23 receptor (IL23R).